A 338-amino-acid polypeptide reads, in one-letter code: Phosphonates-binding periplasmic protein (338 aa).

A signal peptide spans Met1–Ala26.

This sequence belongs to the phosphate/phosphite/phosphonate binding protein family. The complex is composed of two ATP-binding proteins (PhnC), two transmembrane proteins (PhnE) and a solute-binding protein (PhnD).

Its subcellular location is the periplasm. Its function is as follows. Phosphonate binding protein that is part of the phosphonate uptake system. Exhibits high affinity for 2-aminoethylphosphonate, and somewhat less affinity to ethylphosphonate, methylphosphonate, phosphonoacetate and phenylphosphonate. The polypeptide is Phosphonates-binding periplasmic protein (phnD) (Escherichia coli (strain K12)).